Here is a 553-residue protein sequence, read N- to C-terminus: 5'-nucleotidase (553 aa).

The signal sequence occupies residues 1 to 21 (MKQRLIVKTALSAAILATLAG). Cys-22 carries N-palmitoyl cysteine lipidation. Cys-22 carries S-diacylglycerol cysteine lipidation. 7 residues coordinate a divalent metal cation: Asp-45, His-47, Asp-88, Asn-120, His-221, His-256, and Gln-258. Substrate-binding positions include Phe-432 and 501 to 507 (YNAAGGD).

The protein belongs to the 5'-nucleotidase family. Chloride serves as cofactor. It depends on Mg(2+) as a cofactor.

Its subcellular location is the cell outer membrane. The enzyme catalyses a ribonucleoside 5'-phosphate + H2O = a ribonucleoside + phosphate. Its function is as follows. Degradation of extracellular 5'-nucleotides for nutritional needs. The polypeptide is 5'-nucleotidase (nutA) (Vibrio vulnificus (strain CMCP6)).